A 424-amino-acid polypeptide reads, in one-letter code: Arogenate dehydratase 1 (424 aa).

The transit peptide at 1 to 52 (MQSLTPSSGVNLKSIIRKTSLPPGQTRFITGRVIKCGYQVDSANTVNTAGAP) directs the protein to the chloroplast. In terms of domain architecture, Prephenate dehydratase spans 131–308 (RVAYQGVPGA…NVTRFVMLAR (178 aa)). Residues 321-412 (TSIVFAHEGT…SFLRVLGSYP (92 aa)) enclose the ACT domain.

Mostly expressed in flowers, especially in petals (corollas and tubes), and, at low levels, in roots, stems, leaves, pistils, stamens, ovaries and sepals.

It localises to the plastid. Its subcellular location is the chloroplast stroma. The catalysed reaction is L-arogenate + H(+) = L-phenylalanine + CO2 + H2O. It functions in the pathway amino-acid biosynthesis; L-phenylalanine biosynthesis; L-phenylalanine from L-arogenate: step 1/1. Converts L-arogenate produced from the shikimate-chorismate pathway into phenylalanine (Phe). Involved in floral volatile benzenoids and phenylpropanoids (FVBP) production. This is Arogenate dehydratase 1 from Petunia hybrida (Petunia).